The primary structure comprises 857 residues: Blue light receptor lreA (857 aa).

3 consecutive PAS domains span residues 306–328, 479–542, and 608–642; these read IIYV…VGQN, LVEN…TTTD, and LSKS…DLMD. A GATA-type zinc finger spans residues 811–836; it reads CAICQTKKTPEWRRGPSGERDLCNSC.

In terms of biological role, transcription factor that acts as a blue light sensor. Plays crucial roles in fungal growth and asexual development. Involved in conidiophore formation, sclerotium production, and conidial stress tolerance. Promotes conidiation by inducing the expression of brlA and abaA. Positively regulates the fungal pathogenicity towards maize. In blue light conditions, inhibits aflatoxin B1 (AFB1) biosynthesis by down-regulating the expression of key genes such as aflA, aflJ, aflH, aflO and aflK. This is Blue light receptor lreA from Aspergillus flavus.